Consider the following 115-residue polypeptide: Thioredoxin-1 (115 aa).

One can recognise a Thioredoxin domain in the interval Leu-2 to Ala-114. Active-site nucleophile residues include Cys-39 and Cys-42. Residues Cys-39 and Cys-42 are joined by a disulfide bond.

The protein belongs to the thioredoxin family. As to expression, expressed in ASJ and ASI ciliated sensory neurons. Expressed in the intestine (at protein level).

Participates in various redox reactions through the reversible oxidation of its active center dithiol to a disulfide and catalyzes dithiol-disulfide exchange reactions. Shown to facilitate the reduction of insulin disulfide bonds. Might play a role in the reversible nitrosylation of cysteine residues in target proteins, and thereby contributing to the response to intracellular nitric oxide. Shapes the ASJ sensory neuron biphasic response to nitric oxide (NO) exposure; trans-nitrosylation activity might inhibit calcium flux to the cytoplasm in ASJ neurons when exposed to a NO stimulus, whereas de-nitrosylation activity might promote calcium flux when NO is diminished. By regulating the NO-induced ASJ sensory neuron activity, mediates the avoidance response to NO-producing organisms like P.aeruginosa. Positively regulates life span extension under normal and caloric restriction conditions, dauer formation and the oxidative stress response. Contributes to the down-regulation of expression of the insulin-like neuropeptide daf-28 in the ASJ neurons in a redox-independent fashion, thereby promoting dauer formation. Negatively regulates the nuclear localization of the intestinal skn-1 transcription factor in a p38 MAPK pathway-dependent and redox-independent fashion. This is Thioredoxin-1 (trx-1) from Caenorhabditis elegans.